The primary structure comprises 180 residues: Der GTPase-activating protein YihI (180 aa).

The span at 1-10 shows a compositional bias: polar residues; it reads MKQPARTSQV. 2 disordered regions span residues 1–102 and 158–180; these read MKQP…PRLT and DAEDEKAEEDMYRLLKGSHRTPE. Over residues 21 to 32 the composition is skewed to basic and acidic residues; that stretch reads TREEINQEARDR. Over residues 45–54 the composition is skewed to polar residues; it reads SRANPATVSQ. Basic and acidic residues predominate over residues 55–67; the sequence is KGDKSQSVKDPRI. Residues 84 to 93 show a composition bias toward low complexity; sequence PANPVKAAKP.

The protein belongs to the YihI family. In terms of assembly, interacts with Der.

A GTPase-activating protein (GAP) that modifies Der/EngA GTPase function. May play a role in ribosome biogenesis. The protein is Der GTPase-activating protein YihI of Erwinia tasmaniensis (strain DSM 17950 / CFBP 7177 / CIP 109463 / NCPPB 4357 / Et1/99).